We begin with the raw amino-acid sequence, 212 residues long: Thymidylate kinase (212 aa).

An ATP-binding site is contributed by 10–17 (GIDGCGKT).

It belongs to the thymidylate kinase family.

The enzyme catalyses dTMP + ATP = dTDP + ADP. Phosphorylation of dTMP to form dTDP in both de novo and salvage pathways of dTTP synthesis. This Synechococcus sp. (strain RCC307) protein is Thymidylate kinase.